Consider the following 731-residue polypeptide: Elongation factor 2 (731 aa).

Residues 19–234 (EYIRNIGICA…DIIDYCNEGK (216 aa)) enclose the tr-type G domain. GTP-binding positions include 28–35 (AHIDHGKT), 94–98 (DTPGH), and 148–151 (NKVD). Position 598 is a diphthamide (histidine 598).

Belongs to the TRAFAC class translation factor GTPase superfamily. Classic translation factor GTPase family. EF-G/EF-2 subfamily.

It localises to the cytoplasm. Functionally, catalyzes the GTP-dependent ribosomal translocation step during translation elongation. During this step, the ribosome changes from the pre-translocational (PRE) to the post-translocational (POST) state as the newly formed A-site-bound peptidyl-tRNA and P-site-bound deacylated tRNA move to the P and E sites, respectively. Catalyzes the coordinated movement of the two tRNA molecules, the mRNA and conformational changes in the ribosome. The sequence is that of Elongation factor 2 from Methanobrevibacter ruminantium (strain ATCC 35063 / DSM 1093 / JCM 13430 / OCM 146 / M1) (Methanobacterium ruminantium).